Here is a 298-residue protein sequence, read N- to C-terminus: Transcription factor bHLH114 (298 aa).

Residues 117–149 (LDHEIRNHKSSKEQITQDYKNLTSKRSEELEEN) are a coiled coil. The segment at 126–154 (SSKEQITQDYKNLTSKRSEELEENSDEYS) is disordered. The span at 129 to 140 (EQITQDYKNLTS) shows a compositional bias: polar residues. Residues 163–212 (LETLSPLPSFKVRKEKLGDRITALQQLVSPFGKTDTASVLNEAVEYIKFL) enclose the bHLH domain.

As to quaternary structure, homodimer. In terms of tissue distribution, differentiating root endodermis.

Its subcellular location is the nucleus. The sequence is that of Transcription factor bHLH114 (BHLH114) from Arabidopsis thaliana (Mouse-ear cress).